The following is a 142-amino-acid chain: Hydrogenase maturation factor HypA (142 aa).

H2 serves as a coordination point for Ni(2+). Zn(2+)-binding residues include C73, C76, C109, and C112.

The protein belongs to the HypA/HybF family.

In terms of biological role, involved in the maturation of [NiFe] hydrogenases. Required for nickel insertion into the metal center of the hydrogenase. The chain is Hydrogenase maturation factor HypA from Methanopyrus kandleri (strain AV19 / DSM 6324 / JCM 9639 / NBRC 100938).